A 499-amino-acid polypeptide reads, in one-letter code: Pyruvate kinase 1 (499 aa).

R50 provides a ligand contact to substrate. Residues N52, S54, D84, and T85 each contribute to the K(+) site. 52–55 (NFSH) provides a ligand contact to ATP. R91 provides a ligand contact to ATP. E241 lines the Mg(2+) pocket. Positions 264, 265, and 297 each coordinate substrate. D265 lines the Mg(2+) pocket.

The protein belongs to the pyruvate kinase family. Homotetramer. Mg(2+) is required as a cofactor. The cofactor is K(+).

The enzyme catalyses pyruvate + ATP = phosphoenolpyruvate + ADP + H(+). It functions in the pathway carbohydrate degradation; glycolysis; pyruvate from D-glyceraldehyde 3-phosphate: step 5/5. With respect to regulation, activated by fructose 2,6-bisphosphate, activated by the effector in a cooperative manner. In Trypanosoma brucei brucei, this protein is Pyruvate kinase 1 (PYK1).